The following is a 154-amino-acid chain: Probable deoxyuridine 5'-triphosphate nucleotidohydrolase (154 aa).

The protein belongs to the dCTP deaminase family. Archaeal dUTPase subfamily.

The enzyme catalyses dUTP + H2O = dUMP + diphosphate + H(+). It participates in pyrimidine metabolism; dUMP biosynthesis; dUMP from dCTP (dUTP route): step 2/2. Its function is as follows. This enzyme is involved in nucleotide metabolism: it produces dUMP, the immediate precursor of thymidine nucleotides and it decreases the intracellular concentration of dUTP so that uracil cannot be incorporated into DNA. This chain is Probable deoxyuridine 5'-triphosphate nucleotidohydrolase, found in Methanopyrus kandleri (strain AV19 / DSM 6324 / JCM 9639 / NBRC 100938).